Here is a 364-residue protein sequence, read N- to C-terminus: S-adenosylmethionine:tRNA ribosyltransferase-isomerase (364 aa).

Belongs to the QueA family. In terms of assembly, monomer.

Its subcellular location is the cytoplasm. The catalysed reaction is 7-aminomethyl-7-carbaguanosine(34) in tRNA + S-adenosyl-L-methionine = epoxyqueuosine(34) in tRNA + adenine + L-methionine + 2 H(+). It functions in the pathway tRNA modification; tRNA-queuosine biosynthesis. Its function is as follows. Transfers and isomerizes the ribose moiety from AdoMet to the 7-aminomethyl group of 7-deazaguanine (preQ1-tRNA) to give epoxyqueuosine (oQ-tRNA). In Bradyrhizobium sp. (strain ORS 278), this protein is S-adenosylmethionine:tRNA ribosyltransferase-isomerase.